A 102-amino-acid polypeptide reads, in one-letter code: MASTKLFFSVITVMMLIAMASEMVNGSAFTVWSGPGCNNRAERYSKCGCSAIHQKGGYDFSYTGQTAALYNQAGCSGVAHTRFGSSARACNPFGWKSIFIQC.

Positions 1-26 are cleaved as a signal peptide; that stretch reads MASTKLFFSVITVMMLIAMASEMVNG. Cystine bridges form between cysteine 37–cysteine 90, cysteine 47–cysteine 102, and cysteine 49–cysteine 75.

The protein resides in the secreted. In terms of biological role, antimicrobial peptide which inhibits the growth of a variety of fungi, oomycetes, Gram-positive bacterial phytopatogenes and S.cerevisiae in vitro. No activity against E.coli. This chain is Antimicrobial peptide 1, found in Macadamia integrifolia (Macadamia nut).